Consider the following 82-residue polypeptide: Turripeptide Gsp9.1 (82 aa).

The N-terminal stretch at 1 to 23 (MMAKLMITVMMVLLLSLQQGADG) is a signal peptide. A propeptide spanning residues 24-46 (RSKRWRKNQMAASSIMRNLITAR) is cleaved from the precursor. 4-hydroxyproline occurs at positions 49 and 50. Intrachain disulfides connect Cys-53–Cys-68, Cys-58–Cys-72, and Cys-64–Cys-79. 4-carboxyglutamate is present on residues Glu-60 and Glu-63.

The protein belongs to the Pg turripeptide superfamily. In terms of tissue distribution, expressed by the venom duct.

It is found in the secreted. The sequence is that of Turripeptide Gsp9.1 from Gemmula speciosa (Splendid gem-turris).